The chain runs to 425 residues: Enolase (425 aa).

Gln-163 is a binding site for (2R)-2-phosphoglycerate. Glu-205 serves as the catalytic Proton donor. 3 residues coordinate Mg(2+): Asp-242, Glu-285, and Asp-312. The (2R)-2-phosphoglycerate site is built by Lys-337, Arg-366, Ser-367, and Lys-388. Lys-337 functions as the Proton acceptor in the catalytic mechanism.

This sequence belongs to the enolase family. The cofactor is Mg(2+).

The protein resides in the cytoplasm. The protein localises to the secreted. It is found in the cell surface. It catalyses the reaction (2R)-2-phosphoglycerate = phosphoenolpyruvate + H2O. It functions in the pathway carbohydrate degradation; glycolysis; pyruvate from D-glyceraldehyde 3-phosphate: step 4/5. In terms of biological role, catalyzes the reversible conversion of 2-phosphoglycerate (2-PG) into phosphoenolpyruvate (PEP). It is essential for the degradation of carbohydrates via glycolysis. This is Enolase from Cereibacter sphaeroides (strain ATCC 17025 / ATH 2.4.3) (Rhodobacter sphaeroides).